The primary structure comprises 182 residues: Large ribosomal subunit protein bL25 (182 aa).

Belongs to the bacterial ribosomal protein bL25 family. CTC subfamily. As to quaternary structure, part of the 50S ribosomal subunit; part of the 5S rRNA/L5/L18/L25 subcomplex. Contacts the 5S rRNA. Binds to the 5S rRNA independently of L5 and L18.

Its function is as follows. This is one of the proteins that binds to the 5S RNA in the ribosome where it forms part of the central protuberance. The polypeptide is Large ribosomal subunit protein bL25 (Borrelia turicatae (strain 91E135)).